The primary structure comprises 223 residues: Transcriptional regulatory protein PhoP (223 aa).

The 115-residue stretch at arginine 2–methionine 116 folds into the Response regulatory domain. Aspartate 51 is modified (4-aspartylphosphate). Positions serine 124–leucine 222 form a DNA-binding region, ompR/PhoB-type.

As to quaternary structure, monomer in the inactive, unphosphorylated state and dimer in the active, phosphorylated state. In terms of processing, phosphorylated by PhoQ.

It is found in the cytoplasm. Feedback inhibited by MgrB, which seems to bind PhoQ, altering its activity and that of downstream effector PhoP. PhoP-regulated transcription is redox-sensitive, being activated when the periplasm becomes more reducing (deletion of dsbA/dsbB, or treatment with dithiothreitol). MgrB acts between DsbA/DsbB and PhoP/PhoQ in this pathway. Functionally, member of the two-component regulatory system PhoP/PhoQ involved in adaptation to low Mg(2+) environments and the control of acid resistance genes. In low periplasmic Mg(2+), PhoQ phosphorylates PhoP, resulting in the expression of PhoP-activated genes (PAG) and repression of PhoP-repressed genes (PRG). In high periplasmic Mg(2+), PhoQ dephosphorylates phospho-PhoP, resulting in the repression of PAG and may lead to expression of some PRG. Mediates magnesium influx to the cytosol by activation of MgtA. Promotes expression of the two-component regulatory system rstA/rstB and transcription of the hemL, mgrB, nagA, slyB, vboR and yrbL genes. This chain is Transcriptional regulatory protein PhoP (phoP), found in Escherichia coli (strain K12).